The following is a 209-amino-acid chain: Uracil phosphoribosyltransferase (209 aa).

Residues R79, R104, and 131-139 (DPMLATGGS) each bind 5-phospho-alpha-D-ribose 1-diphosphate. Uracil-binding positions include I194 and 199–201 (GDA). D200 is a binding site for 5-phospho-alpha-D-ribose 1-diphosphate.

This sequence belongs to the UPRTase family. Requires Mg(2+) as cofactor.

The catalysed reaction is UMP + diphosphate = 5-phospho-alpha-D-ribose 1-diphosphate + uracil. It participates in pyrimidine metabolism; UMP biosynthesis via salvage pathway; UMP from uracil: step 1/1. Its activity is regulated as follows. Allosterically activated by GTP. Functionally, catalyzes the conversion of uracil and 5-phospho-alpha-D-ribose 1-diphosphate (PRPP) to UMP and diphosphate. The chain is Uracil phosphoribosyltransferase from Geobacter sulfurreducens (strain ATCC 51573 / DSM 12127 / PCA).